We begin with the raw amino-acid sequence, 521 residues long: uncharacterized protein (521 aa).

10 consecutive transmembrane segments (helical) span residues 103-123 (NLML…VPMP), 136-156 (FWFF…LWIT), 177-197 (YILF…FTAW), 200-220 (ITFT…GISF), 259-279 (AYAH…VYIV), 299-319 (IMYV…SSWI), 327-346 (YALV…VYVR), 358-378 (FVLV…LITM), 411-431 (CVAS…LHFG), and 450-470 (FKLT…ASYL).

It localises to the membrane. This is an uncharacterized protein from Schizosaccharomyces pombe (strain 972 / ATCC 24843) (Fission yeast).